Here is a 295-residue protein sequence, read N- to C-terminus: Aspartate carbamoyltransferase catalytic subunit (295 aa).

Residues arginine 49 and threonine 50 each contribute to the carbamoyl phosphate site. Lysine 77 contacts L-aspartate. Residues arginine 99, histidine 127, and glutamine 130 each contribute to the carbamoyl phosphate site. 2 residues coordinate L-aspartate: arginine 161 and arginine 212. Residues glycine 251 and proline 252 each contribute to the carbamoyl phosphate site.

This sequence belongs to the aspartate/ornithine carbamoyltransferase superfamily. ATCase family. In terms of assembly, heterododecamer (2C3:3R2) of six catalytic PyrB chains organized as two trimers (C3), and six regulatory PyrI chains organized as three dimers (R2).

The catalysed reaction is carbamoyl phosphate + L-aspartate = N-carbamoyl-L-aspartate + phosphate + H(+). The protein operates within pyrimidine metabolism; UMP biosynthesis via de novo pathway; (S)-dihydroorotate from bicarbonate: step 2/3. Its function is as follows. Catalyzes the condensation of carbamoyl phosphate and aspartate to form carbamoyl aspartate and inorganic phosphate, the committed step in the de novo pyrimidine nucleotide biosynthesis pathway. This chain is Aspartate carbamoyltransferase catalytic subunit, found in Campylobacter jejuni (strain RM1221).